The chain runs to 209 residues: Large ribosomal subunit protein uL3c (209 aa).

Residues P132 to R154 form a disordered region.

The protein belongs to the universal ribosomal protein uL3 family. As to quaternary structure, part of the 50S ribosomal subunit.

The protein resides in the plastid. Its subcellular location is the cyanelle. Its function is as follows. One of the primary rRNA binding proteins, it binds directly near the 3'-end of the 23S rRNA, where it nucleates assembly of the 50S subunit. This chain is Large ribosomal subunit protein uL3c (rpl3), found in Cyanophora paradoxa.